We begin with the raw amino-acid sequence, 390 residues long: Succinate--CoA ligase [ADP-forming] subunit beta (390 aa).

Positions 9-244 constitute an ATP-grasp domain; sequence KEILKRYGVN…ETQTDTSENE (236 aa). ATP-binding positions include lysine 46, 53-55, glutamate 99, leucine 102, and glutamate 107; that span reads GRG. Residues asparagine 199 and aspartate 213 each contribute to the Mg(2+) site. Substrate contacts are provided by residues asparagine 264 and 321-323; that span reads GIV.

It belongs to the succinate/malate CoA ligase beta subunit family. Heterotetramer of two alpha and two beta subunits. Mg(2+) serves as cofactor.

The enzyme catalyses succinate + ATP + CoA = succinyl-CoA + ADP + phosphate. It carries out the reaction GTP + succinate + CoA = succinyl-CoA + GDP + phosphate. It participates in carbohydrate metabolism; tricarboxylic acid cycle; succinate from succinyl-CoA (ligase route): step 1/1. Functionally, succinyl-CoA synthetase functions in the citric acid cycle (TCA), coupling the hydrolysis of succinyl-CoA to the synthesis of either ATP or GTP and thus represents the only step of substrate-level phosphorylation in the TCA. The beta subunit provides nucleotide specificity of the enzyme and binds the substrate succinate, while the binding sites for coenzyme A and phosphate are found in the alpha subunit. This is Succinate--CoA ligase [ADP-forming] subunit beta from Campylobacter curvus (strain 525.92).